Reading from the N-terminus, the 194-residue chain is Putative 3-methyladenine DNA glycosylase (194 aa).

This sequence belongs to the DNA glycosylase MPG family.

This is Putative 3-methyladenine DNA glycosylase from Chlamydia felis (strain Fe/C-56) (Chlamydophila felis).